Here is a 169-residue protein sequence, read N- to C-terminus: SsrA-binding protein (169 aa).

Belongs to the SmpB family.

It localises to the cytoplasm. Functionally, required for rescue of stalled ribosomes mediated by trans-translation. Binds to transfer-messenger RNA (tmRNA), required for stable association of tmRNA with ribosomes. tmRNA and SmpB together mimic tRNA shape, replacing the anticodon stem-loop with SmpB. tmRNA is encoded by the ssrA gene; the 2 termini fold to resemble tRNA(Ala) and it encodes a 'tag peptide', a short internal open reading frame. During trans-translation Ala-aminoacylated tmRNA acts like a tRNA, entering the A-site of stalled ribosomes, displacing the stalled mRNA. The ribosome then switches to translate the ORF on the tmRNA; the nascent peptide is terminated with the 'tag peptide' encoded by the tmRNA and targeted for degradation. The ribosome is freed to recommence translation, which seems to be the essential function of trans-translation. This chain is SsrA-binding protein, found in Mycolicibacterium paratuberculosis (strain ATCC BAA-968 / K-10) (Mycobacterium paratuberculosis).